The primary structure comprises 292 residues: Phosphotriesterase homology protein (292 aa).

Positions 12, 14, and 125 each coordinate Zn(2+). Residue 148–149 participates in beta-D-glucose binding; sequence HN. Histidine 158 contributes to the Zn(2+) binding site. Residues glycine 176, aspartate 178, and arginine 181 each coordinate beta-D-glucose. Zn(2+) is bound by residues histidine 186 and aspartate 243. Aspartate 280 and arginine 284 together coordinate beta-D-glucose.

The protein belongs to the metallo-dependent hydrolases superfamily. Phosphotriesterase family. In terms of assembly, monomer. Zn(2+) is required as a cofactor.

With respect to regulation, activity is higher in the enzyme containing Mn(2+) than that containing Zn(2+). Catalyzes the hydrolysis of phosphorylated glyceryl acetates in which the presence of a phosphate group is required for the enzymatic hydrolysis. Hydrolyzes a dibutyl glycerol derivative suggesting it acts on phosphoglycerol substrates with a butyrate leaving group. Also active with aromatic acetates and propionates. No activity with various sugar phosphates, with various nitrophenylphosphate or nitrophenylphosphonate derivatives, or with phosphorylated or non-phosphorylated sugar lactones tested. Does not hydrolyze non-phosphorylated carboxyesters with long chain leaving groups. No general esterase, aminopeptidase, sulfatase, phosphatase, carbonic anhydrase, phosphodiesterase, and phosphotriesterase activities detected when tested with the following non-specific substrates: p-nitrophenyl acetate, L-alanine nitroanilide, p-nitrophenyl sulfate, bis(p-nitrophenyl) phosphate, paraoxon, and p-nitrophenyl phosphate. This Escherichia coli (strain K12) protein is Phosphotriesterase homology protein.